A 66-amino-acid chain; its full sequence is Large ribosomal subunit protein uL29 (66 aa).

This sequence belongs to the universal ribosomal protein uL29 family.

This is Large ribosomal subunit protein uL29 from Bartonella quintana (strain Toulouse) (Rochalimaea quintana).